The following is a 662-amino-acid chain: Hypoxia-inducible factor 3-alpha (662 aa).

A disordered region spans residues 1 to 25; that stretch reads MDWDQDRSSTELRKEKSRDAARSRR. Residues 12–65 enclose the bHLH domain; it reads LRKEKSRDAARSRRSQETEVLYQLAHTLPFARGVSAHLDKASIMRLTISYLRMH. Residues 75-98 are nuclear localization signal; the sequence is QVRKEGEPLDACYLKALEGFVMVL. 2 consecutive PAS domains span residues 80-150 and 225-295; these read GEPL…PSLS and PHPA…LSKG. The tract at residues 228–272 is nuclear export signal; that stretch reads ASLEPPLGRGAFLSRHSLDMKFTYCDERIAEVAGYSPDDLIGCSA. The disordered stretch occupies residues 352-379; sequence EQTEQHTRRPPQLGTSSKKGIPGNSLDP. The short motif at 410-413 is the LRRLL element; it reads LRRL. 2 disordered regions span residues 417-445 and 459-480; these read ILDG…ADLP and STAR…PDTP. Residues 421 to 433 are compositionally biased toward low complexity; it reads PPTAATPSTPQAA. An ODD region spans residues 448-581; sequence LAVGLENAHR…SEDKGLELLE (134 aa). Residues 450–501 form an NTAD region; sequence VGLENAHRLSTARKNKTMETDLDIAQDPDTPDLEMLAPYISMDDDFQLNSSE. Lysine 463 participates in a covalent cross-link: Glycyl lysine isopeptide (Lys-Gly) (interchain with G-Cter in ubiquitin). A compositionally biased stretch (acidic residues) spans 469 to 480; it reads TDLDIAQDPDTP. The LAPYISMD signature appears at 485-492; it reads LAPYISMD. Residue proline 487 is modified to 4-hydroxyproline. Residues 500 to 595 form a disordered region; the sequence is SEQLPKVHRR…KRSPRLEPGS (96 aa). Basic residues predominate over residues 505–521; sequence KVHRRPPRTARRPRARS. Lysine 565 participates in a covalent cross-link: Glycyl lysine isopeptide (Lys-Gly) (interchain with G-Cter in ubiquitin). The span at 572-584 shows a compositional bias: basic and acidic residues; it reads SEDKGLELLETKP.

Interacts with ARNT, BAD, BCL2L2, EPAS1, HIF1A, MCL1 and VHL. Post-translationally, in normoxia, hydroxylated on Pro-487 in the oxygen-dependent degradation domain (ODD) by PHD. The hydroxylated proline promotes interaction with VHL, initiating rapid ubiquitination and subsequent proteasomal degradation. Ubiquitinated; ubiquitination occurs in a VHL- and oxygen-dependent pathway and subsequently targeted for proteasomal degradation. As to expression, expressed in the perivenous zone of the liver. Expressed in all tissues examined during normoxia. Expressed in brain and lung. Expressed in periportal and perivenous hepatocytes and in endothelial cells of the central vein (at protein level). Highest expression seen in the cerebral cortex, hippocampus, and lung. Low expression in myocardial tissue and liver.

The protein resides in the nucleus. The protein localises to the cytoplasm. It is found in the nucleus speckle. It localises to the mitochondrion. Functionally, acts as a transcriptional regulator in adaptive response to low oxygen tension. Attenuates the ability of transcription factor HIF1A, EPAS1 and the HIF1A-ARNT complex to bind to hypoxia-responsive elements (HRE) located within the enhancer/promoter of hypoxia-inducible target genes and hence inhibits HRE-driven transcriptional activation. Functions as an inhibitor of angiogenesis in hypoxic cells of the cornea. Plays a role in the development of the cardiorespiratory system. May also be involved in apoptosis. May act as a tumor suppressor. In Rattus norvegicus (Rat), this protein is Hypoxia-inducible factor 3-alpha.